Here is a 636-residue protein sequence, read N- to C-terminus: 1-deoxy-D-xylulose-5-phosphate synthase (636 aa).

Residues His-74 and Gly-115 to Ser-117 contribute to the thiamine diphosphate site. Mg(2+) is bound at residue Asp-146. Thiamine diphosphate is bound by residues Gly-147–Ala-148, Asn-175, Tyr-286, and Glu-367. Asn-175 contacts Mg(2+).

It belongs to the transketolase family. DXPS subfamily. Homodimer. Requires Mg(2+) as cofactor. Thiamine diphosphate serves as cofactor.

The enzyme catalyses D-glyceraldehyde 3-phosphate + pyruvate + H(+) = 1-deoxy-D-xylulose 5-phosphate + CO2. The protein operates within metabolic intermediate biosynthesis; 1-deoxy-D-xylulose 5-phosphate biosynthesis; 1-deoxy-D-xylulose 5-phosphate from D-glyceraldehyde 3-phosphate and pyruvate: step 1/1. In terms of biological role, catalyzes the acyloin condensation reaction between C atoms 2 and 3 of pyruvate and glyceraldehyde 3-phosphate to yield 1-deoxy-D-xylulose-5-phosphate (DXP). In Halothermothrix orenii (strain H 168 / OCM 544 / DSM 9562), this protein is 1-deoxy-D-xylulose-5-phosphate synthase.